A 319-amino-acid polypeptide reads, in one-letter code: 1-aminocyclopropane-1-carboxylate oxidase (319 aa).

One can recognise a Fe2OG dioxygenase domain in the interval 153-253 (PTFGTKVSNY…RMSIASFYNP (101 aa)). The Fe cation site is built by H177, D179, and H234.

It belongs to the iron/ascorbate-dependent oxidoreductase family. Fe cation is required as a cofactor.

It catalyses the reaction 1-aminocyclopropane-1-carboxylate + L-ascorbate + O2 = ethene + L-dehydroascorbate + hydrogen cyanide + CO2 + 2 H2O. The protein operates within alkene biosynthesis; ethylene biosynthesis via S-adenosyl-L-methionine; ethylene from S-adenosyl-L-methionine: step 2/2. This Prunus mume (Japanese apricot) protein is 1-aminocyclopropane-1-carboxylate oxidase (ACO1).